The following is an 838-amino-acid chain: Leucine--tRNA ligase (838 aa).

The short motif at 38–48 (PYPSGKAHVGH) is the 'HIGH' region element. The 'KMSKS' region motif lies at 608-612 (KMSKS). An ATP-binding site is contributed by lysine 611.

Belongs to the class-I aminoacyl-tRNA synthetase family.

It is found in the cytoplasm. The enzyme catalyses tRNA(Leu) + L-leucine + ATP = L-leucyl-tRNA(Leu) + AMP + diphosphate. This chain is Leucine--tRNA ligase, found in Orientia tsutsugamushi (strain Boryong) (Rickettsia tsutsugamushi).